Reading from the N-terminus, the 427-residue chain is UPF0597 protein CPR_0790 (427 aa).

The protein belongs to the UPF0597 family.

The sequence is that of UPF0597 protein CPR_0790 from Clostridium perfringens (strain SM101 / Type A).